We begin with the raw amino-acid sequence, 347 residues long: Protease HtpX homolog (347 aa).

3 helical membrane-spanning segments follow: residues 8–28 (IAFG…VVIA), 46–66 (ALTA…IAIV), and 76–96 (WGFI…TYIA). His174 serves as a coordination point for Zn(2+). Residue Glu175 is part of the active site. His178 provides a ligand contact to Zn(2+). Helical transmembrane passes span 185–205 (ALML…VSSV) and 221–241 (LLAA…LLVL). Glu248 is a Zn(2+) binding site.

The protein belongs to the peptidase M48B family. Requires Zn(2+) as cofactor.

Its subcellular location is the cell membrane. This chain is Protease HtpX homolog, found in Pyrobaculum islandicum (strain DSM 4184 / JCM 9189 / GEO3).